The primary structure comprises 189 residues: MRAKQTVVVSLGQRVCGAVSLNPPGVKSSVKKAAKRRVLLQRSAPDIARAVRQMAGDGGEAKRLPKRPFHGEVEENSSAAVDGNVKIQPGKKAPGERRGKENSAAKCTGLTSGSAEAKMEQSVHGSQTTDPSVFFDEDSNHVFPVEQFFGNLDVVEDYPRRTPGSKRMTRREYRSMHYYAKEDSEEEHL.

Residues 53 to 137 form a disordered region; the sequence is QMAGDGGEAK…TTDPSVFFDE (85 aa). Composition is skewed to basic and acidic residues over residues 59 to 73 and 93 to 103; these read GEAKRLPKRPFHGEV and APGERRGKENS.

This sequence belongs to the UPF0688 family.

Its subcellular location is the nucleus. In Danio rerio (Zebrafish), this protein is UPF0688 protein C1orf174 homolog.